A 184-amino-acid chain; its full sequence is UPF0302 protein OB1778 (184 aa).

The protein belongs to the UPF0302 family.

The protein is UPF0302 protein OB1778 of Oceanobacillus iheyensis (strain DSM 14371 / CIP 107618 / JCM 11309 / KCTC 3954 / HTE831).